The primary structure comprises 50 residues: IYVRPTKDELLYCGEFRELGQPDKKCRCDGKPCTVGRCNFARGDNDDKCI.

A Cell attachment site motif is present at residues 42–44 (RGD).

It belongs to the ornatin family.

Its subcellular location is the secreted. Functionally, potent inhibitor of fibrinogen interaction with platelet receptors expressed on glycoprotein IIb-IIIa complex. May prevent blood from clotting during either feeding and/or storage of ingested blood. This Placobdella ornata (Turtle leech) protein is Ornatin-E.